Reading from the N-terminus, the 601-residue chain is Glutathione-regulated potassium-efflux system protein KefB (601 aa).

Helical transmembrane passes span 4-24, 29-49, 55-75, 87-107, 111-131, 152-172, 177-197, 207-227, 230-250, 262-282, 284-304, 324-344, and 356-376; these read ADLL…VPLA, IGAV…GLGF, EILH…GLEL, IFGV…GLLM, FLWQ…TAMA, VLLF…LLAG, HFDW…LIGG, FIAA…LVLS, LFMD…GVLL, AIDP…GMSL, LGVL…LVVI, MQFA…FSTA, and ALLL…MKGI. The RCK N-terminal domain occupies 400-519; that stretch reads KPQVIVVGFG…AGVTQFSRET (120 aa).

The protein belongs to the monovalent cation:proton antiporter 2 (CPA2) transporter (TC 2.A.37) family. KefB subfamily. Interacts with the regulatory subunit KefG.

Its subcellular location is the cell inner membrane. In terms of biological role, pore-forming subunit of a potassium efflux system that confers protection against electrophiles. Catalyzes K(+)/H(+) antiport. This chain is Glutathione-regulated potassium-efflux system protein KefB, found in Salmonella paratyphi B (strain ATCC BAA-1250 / SPB7).